We begin with the raw amino-acid sequence, 128 residues long: Large ribosomal subunit protein bL12 (128 aa).

The protein belongs to the bacterial ribosomal protein bL12 family. As to quaternary structure, homodimer. Part of the ribosomal stalk of the 50S ribosomal subunit. Forms a multimeric L10(L12)X complex, where L10 forms an elongated spine to which 2 to 4 L12 dimers bind in a sequential fashion. Binds GTP-bound translation factors.

In terms of biological role, forms part of the ribosomal stalk which helps the ribosome interact with GTP-bound translation factors. Is thus essential for accurate translation. This Thermosipho africanus (strain TCF52B) protein is Large ribosomal subunit protein bL12.